The sequence spans 637 residues: Chaperone protein HtpG (637 aa).

The interval 1–345 (MSQQETHGFQ…SNDLPLNVSR (345 aa)) is a; substrate-binding. Residues 346 to 562 (EILQDNHITK…EGEMSSQMIK (217 aa)) form a b region. The c stretch occupies residues 563 to 637 (LMQAAGQPVP…MNQMLLANLK (75 aa)).

This sequence belongs to the heat shock protein 90 family. Homodimer.

The protein resides in the cytoplasm. Molecular chaperone. Has ATPase activity. The chain is Chaperone protein HtpG from Shewanella sp. (strain MR-4).